The sequence spans 396 residues: Mannonate dehydratase (396 aa).

It belongs to the mannonate dehydratase family. It depends on Fe(2+) as a cofactor. Mn(2+) serves as cofactor.

The enzyme catalyses D-mannonate = 2-dehydro-3-deoxy-D-gluconate + H2O. It functions in the pathway carbohydrate metabolism; pentose and glucuronate interconversion. Functionally, catalyzes the dehydration of D-mannonate. The protein is Mannonate dehydratase of Serratia proteamaculans (strain 568).